The following is a 160-amino-acid chain: Cytochrome b6-f complex subunit 4 (160 aa).

3 consecutive transmembrane segments (helical) span residues 36-56 (LLYI…GLAV), 95-115 (LLGV…PFPE), and 131-151 (TVFS…ALPI).

The protein belongs to the cytochrome b family. PetD subfamily. As to quaternary structure, the 4 large subunits of the cytochrome b6-f complex are cytochrome b6, subunit IV (17 kDa polypeptide, petD), cytochrome f and the Rieske protein, while the 4 small subunits are petG, petL, petM and petN. The complex functions as a dimer.

The protein resides in the plastid. The protein localises to the chloroplast thylakoid membrane. Component of the cytochrome b6-f complex, which mediates electron transfer between photosystem II (PSII) and photosystem I (PSI), cyclic electron flow around PSI, and state transitions. In Huperzia lucidula (Shining clubmoss), this protein is Cytochrome b6-f complex subunit 4.